The following is a 154-amino-acid chain: Deoxyuridine 5'-triphosphate nucleotidohydrolase (154 aa).

Substrate contacts are provided by residues 64-66, Asn-77, 81-83, and Lys-91; these read RSG and TID.

Belongs to the dUTPase family. As to quaternary structure, homotrimer. It depends on Mg(2+) as a cofactor.

It catalyses the reaction dUTP + H2O = dUMP + diphosphate + H(+). It functions in the pathway pyrimidine metabolism; dUMP biosynthesis; dUMP from dCTP (dUTP route): step 2/2. This enzyme is involved in nucleotide metabolism: it produces dUMP, the immediate precursor of thymidine nucleotides and it decreases the intracellular concentration of dUTP so that uracil cannot be incorporated into DNA. The protein is Deoxyuridine 5'-triphosphate nucleotidohydrolase of Mycobacterium bovis (strain BCG / Pasteur 1173P2).